The chain runs to 101 residues: MILEHVLVLSAYLFSIGIYGLITSRNMVRALMCLELILNSVNLNFVTFSDFFDSRQLKGDIFSIFIIAIAAAEAAIGLAIVSSIYRNRKSIRINQSNLLNK.

3 helical membrane passes run I2–I22, M32–F52, and I61–V81.

It belongs to the complex I subunit 4L family. As to quaternary structure, NDH is composed of at least 16 different subunits, 5 of which are encoded in the nucleus.

The protein localises to the plastid. It localises to the chloroplast thylakoid membrane. It carries out the reaction a plastoquinone + NADH + (n+1) H(+)(in) = a plastoquinol + NAD(+) + n H(+)(out). The enzyme catalyses a plastoquinone + NADPH + (n+1) H(+)(in) = a plastoquinol + NADP(+) + n H(+)(out). Its function is as follows. NDH shuttles electrons from NAD(P)H:plastoquinone, via FMN and iron-sulfur (Fe-S) centers, to quinones in the photosynthetic chain and possibly in a chloroplast respiratory chain. The immediate electron acceptor for the enzyme in this species is believed to be plastoquinone. Couples the redox reaction to proton translocation, and thus conserves the redox energy in a proton gradient. This Oenothera argillicola (Appalachian evening primrose) protein is NAD(P)H-quinone oxidoreductase subunit 4L, chloroplastic.